The chain runs to 364 residues: MTKLKVAVLFGGVSTEHEISIVSAKSIMQNMDKEKYEVIPIGITKEGKWLLYTGKIEDLDSKWTQFSIECFVSPDRTKKALVKVKDNEATFIDIDVVFPVLHGLNGEDGTVQGLLELSGIPYVGCGVLSSAICMDKAFAKKLALLEGIPQGHFLVVYKNEYSAKKDYFIRRIESEFSYPVFVKPANSGSSVGISKAKDREDLVLAIHEAFLYDTKILIEQAINAREIECAVLGNDEVFVSEPGEIIPSREFYSYEAKYIDNSSELIIPARLPKEVTEEIKDLAGRIYKIFECCGMARVDFFVDKDTNKVYFNEVNTIPGFTSISMYPKLMEFSGIPYSQLIDKLISLAIEKNRQKKSIKYSKEG.

Residues 140-346 enclose the ATP-grasp domain; that stretch reads KKLALLEGIP…YSQLIDKLIS (207 aa). Residue 173–228 participates in ATP binding; that stretch reads ESEFSYPVFVKPANSGSSVGISKAKDREDLVLAIHEAFLYDTKILIEQAINAREIE. Positions 299, 313, and 315 each coordinate Mg(2+).

Belongs to the D-alanine--D-alanine ligase family. The cofactor is Mg(2+). Mn(2+) is required as a cofactor.

The protein localises to the cytoplasm. The enzyme catalyses 2 D-alanine + ATP = D-alanyl-D-alanine + ADP + phosphate + H(+). The protein operates within cell wall biogenesis; peptidoglycan biosynthesis. Functionally, cell wall formation. The sequence is that of D-alanine--D-alanine ligase from Caldicellulosiruptor bescii (strain ATCC BAA-1888 / DSM 6725 / KCTC 15123 / Z-1320) (Anaerocellum thermophilum).